The following is a 268-amino-acid chain: MAVGKNKGLSKGGKKGGKKKVVDPFSRKDWYDVKAPNMFQTRQIGKTLVNRTQGQRIASDYLKGRVFEVSLADLQKDIDPERSFRKFRLIAEDVQDRNVLCNFHGMDLTTDKYRSMVKKWQTLIEAIVEAKTVDGYLLRVFCIGFTSKDQQSQRKTCYAQQSQVRKIRARMTDIITNEVSGADLKQLVNKLALDSIAKDIEKSCQRIYPLHDVYIRKVKVLKKPRFDVSKLLELHGDGGGKTTEAVVSAEGAVIDRPEGYEPPVQEAV.

The segment at methionine 1 to valine 21 is disordered.

This sequence belongs to the eukaryotic ribosomal protein eS1 family. Component of the small ribosomal subunit. Mature ribosomes consist of a small (40S) and a large (60S) subunit. The 40S subunit contains about 33 different proteins and 1 molecule of RNA (18S). The 60S subunit contains about 49 different proteins and 3 molecules of RNA (28S, 5.8S and 5S).

The protein resides in the cytoplasm. Essential for oogenesis; required for late follicle cell development. This Drosophila virilis (Fruit fly) protein is Small ribosomal subunit protein eS1.